A 214-amino-acid polypeptide reads, in one-letter code: Triosephosphate isomerase (214 aa).

Residue 6–8 coordinates substrate; sequence NLK. The Electrophile role is filled by His-85. Catalysis depends on Glu-133, which acts as the Proton acceptor. Substrate is bound by residues Ile-138, Gly-173, and 194-195; that span reads AS.

Belongs to the triosephosphate isomerase family. In terms of assembly, homotetramer; dimer of dimers.

The protein resides in the cytoplasm. The catalysed reaction is D-glyceraldehyde 3-phosphate = dihydroxyacetone phosphate. It participates in carbohydrate biosynthesis; gluconeogenesis. It functions in the pathway carbohydrate degradation; glycolysis; D-glyceraldehyde 3-phosphate from glycerone phosphate: step 1/1. Functionally, involved in the gluconeogenesis. Catalyzes stereospecifically the conversion of dihydroxyacetone phosphate (DHAP) to D-glyceraldehyde-3-phosphate (G3P). The chain is Triosephosphate isomerase from Halobacterium salinarum (strain ATCC 700922 / JCM 11081 / NRC-1) (Halobacterium halobium).